A 162-amino-acid polypeptide reads, in one-letter code: uncharacterized protein (162 aa).

The HTH asnC-type domain maps to 6 to 71 (LDDLDRAILK…PIKPRKLALV (66 aa)). Residues 25-44 (IAEISNQLKKPESTVHFRIK) constitute a DNA-binding region (H-T-H motif).

This is an uncharacterized protein from Pyrococcus abyssi (strain GE5 / Orsay).